The primary structure comprises 419 residues: L-rhamnose isomerase (419 aa).

3 residues coordinate Mn(2+): His-262, Asp-294, and Asp-296.

It belongs to the rhamnose isomerase family. Homotetramer. The cofactor is Mn(2+).

It localises to the cytoplasm. It catalyses the reaction L-rhamnopyranose = L-rhamnulose. Its pathway is carbohydrate degradation; L-rhamnose degradation; glycerone phosphate from L-rhamnose: step 1/3. Catalyzes the interconversion of L-rhamnose and L-rhamnulose. This chain is L-rhamnose isomerase, found in Escherichia coli O7:K1 (strain IAI39 / ExPEC).